A 436-amino-acid chain; its full sequence is Serine--tRNA ligase (436 aa).

Residue 239-241 participates in L-serine binding; that stretch reads TAE. Residue 270–272 coordinates ATP; sequence RKE. An L-serine-binding site is contributed by glutamate 293. 357 to 360 provides a ligand contact to ATP; sequence EISS. Serine 392 serves as a coordination point for L-serine.

The protein belongs to the class-II aminoacyl-tRNA synthetase family. Type-1 seryl-tRNA synthetase subfamily. As to quaternary structure, homodimer. The tRNA molecule binds across the dimer.

The protein resides in the cytoplasm. The catalysed reaction is tRNA(Ser) + L-serine + ATP = L-seryl-tRNA(Ser) + AMP + diphosphate + H(+). It catalyses the reaction tRNA(Sec) + L-serine + ATP = L-seryl-tRNA(Sec) + AMP + diphosphate + H(+). Its pathway is aminoacyl-tRNA biosynthesis; selenocysteinyl-tRNA(Sec) biosynthesis; L-seryl-tRNA(Sec) from L-serine and tRNA(Sec): step 1/1. Catalyzes the attachment of serine to tRNA(Ser). Is also able to aminoacylate tRNA(Sec) with serine, to form the misacylated tRNA L-seryl-tRNA(Sec), which will be further converted into selenocysteinyl-tRNA(Sec). The chain is Serine--tRNA ligase from Leuconostoc citreum (strain KM20).